The chain runs to 5289 residues: MGLPLARLAAVCLALSLAGGSELQTEGRTRNHGHNVCSTWGNFHYKTFDGDVFRFPGLCDYNFASDCRGSYKEFAVHLKRGPGQAEAPAGVESILLTIKDDTIYLTRHLAVLNGAVVSTPHYSPGLLIEKSDAYTKVYSRAGLTLMWNREDALMLELDTKFRNHTCGLCGDYNGLQSYSEFLSDGVLFSPLEFGNMQKINQPDVVCEDPEEEVAPASCSEHRAECERLLTAEAFADCQDLVPLEPYLRACQQDRCRCPGGDTCVCSTVAEFSRQCSHAGGRPGNWRTATLCPKTCPGNLVYLESGSPCMDTCSHLEVSSLCEEHRMDGCFCPEGTVYDDIGDSGCVPVSQCHCRLHGHLYTPGQEITNDCEQCVCNAGRWVCKDLPCPGTCALEGGSHITTFDGKTYTFHGDCYYVLAKGDHNDSYALLGELAPCGSTDKQTCLKTVVLLADKKKNVVVFKSDGSVLLNELQVNLPHVTASFSVFRPSSYHIMVSMAIGVRLQVQLAPVMQLFVTLDQASQGQVQGLCGNFNGLEGDDFKTASGLVEATGAGFANTWKAQSSCHDKLDWLDDPCSLNIESANYAEHWCSLLKKTETPFGRCHSAVDPAEYYKRCKYDTCNCQNNEDCLCAALSSYARACTAKGVMLWGWREHVCNKDVGSCPNSQVFLYNLTTCQQTCRSLSEADSHCLEGFAPVDGCGCPDHTFLDEKGRCVPLAKCSCYHRGLYLEAGDVVVRQEERCVCRDGRLHCRQIRLIGQSCTAPKIHMDCSNLTALATSKPRALSCQTLAAGYYHTECVSGCVCPDGLMDDGRGGCVVEKECPCVHNNDLYSSGAKIKVDCNTCTCKRGRWVCTQAVCHGTCSIYGSGHYITFDGKYYDFDGHCSYVAVQDYCGQNSSLGSFSIITENVPCGTTGVTCSKAIKIFMGRTELKLEDKHRVVIQRDEGHHVAYTTREVGQYLVVESSTGIIVIWDKRTTVFIKLAPSYKGTVCGLCGNFDHRSNNDFTTRDHMVVSSELDFGNSWKEAPTCPDVSTNPEPCSLNPHRRSWAEKQCSILKSSVFSICHSKVDPKPFYEACVHDSCSCDTGGDCECFCSAVASYAQECTKEGACVFWRTPDLCPIFCDYYNPPHECEWHYEPCGNRSFETCRTINGIHSNISVSYLEGCYPRCPKDRPIYEEDLKKCVTADKCGCYVEDTHYPPGASVPTEETCKSCVCTNSSQVVCRPEEGKILNQTQDGAFCYWEICGPNGTVEKHFNICSITTRPSTLTTFTTITLPTTPTTFTTTTTTTTPTSSTVLSTTPKLCCLWSDWINEDHPSSGSDDGDRETFDGVCGAPEDIECRSVKDPHLSLEQLGQKVQCDVSVGFICKNEDQFGNGPFGLCYDYKIRVNCCWPMDKCITTPSPPTTTPSPPPTSTTTLPPTTTPSPPTTTTTTPPPTTTPSPPITTTTTPPPTTTPSPPISTTTTPPPTTTPSPPTTTPSPPTTTPSPPTTTTTTPPPTTTPSPPTTTPITPPASTTTLPPTTTPSPPTTTTTTPPPTTTPSPPTTTPITPPTSTTTLPPTTTPSPPPTTTTTPPPTTTPSPPTTTTPSPPTITTTTPPPTTTPSPPTTTTTTPPPTTTPSPPTTTPITPPTSTTTLPPTTTPSPPPTTTTTPPPTTTPSPPTTTTPSPPITTTTTPPPTTTPSSPITTTPSPPTTTMTTPSPTTTPSSPITTTTTPSSTTTPSPPPTTMTTPSPTTTPSPPTTTMTTLPPTTTSSPLTTTPLPPSITPPTFSPFSTTTPTTPCVPLCNWTGWLDSGKPNFHKPGGDTELIGDVCGPGWAANISCRATMYPDVPIGQLGQTVVCDVSVGLICKNEDQKPGGVIPMAFCLNYEINVQCCECVTQPTTMTTTTTENPTPTPITTTTTVTPTPTPTSTQSTTPTPITTTNTVTPTPTPTGTQTPTPTPITTTTTMVTPTPTITSTQTPTPTPITTTTVTPTPTPTSTQRTTPTSITTTTTVTPTPTPTGTQTPTTTPITTTTTVTPTPTPTGTQTPTTTPISTTTMVTPTPTPTGTQTLTPTPITTTTTVTPTPTPTGTQTPTSTPISTTTTVTPTPTPTGTQTPTLTPITTTTTVTPTPTPTGTQTPTTTPITTTTTVTPTPTPTGTKSTTPTSITTTTMVTPTPPPTGTQTPTTTPITTTTTVTPTPTPTGTQTPTPTPITTTTTVTPTPTPTGTQTPTSTPITTNTTVTPTPTPTGTPSTTLTPITTTTMVTPTPTPTGTQTPTSTPISTTTTVTPTPTPTGTQTPTPTPISTTTTVTPTPTPTSTQTPTTTPITTTTTVTPNPTPTGTQTPTTTPITTTTTVTPTPTPTGTQTPTTTPISTTTTVTPTPTPTGTQTPTTTAITTTTTVTPTPTPTGTQTPTSTPITTTTTVTPTPTPTGTQTPTSTPISNTTTVTPTPTPTGTQTPTVTPITTTTTVTPTRTPTGTKSTTPTSITTTTMVTPTPTPTGTHTPTTTPITTTTTVTPTPTPTGTQTPTPTPITTTTTVTPTPTPTGTQTPTSTPITTTTTVTPTPTPTGTQTPTTTPITTNTTVTPTPTPTGTQTPTTVLITTTTTMTPTPTPTSTKSTTVTPITTTTTVTPTPTPTGTQSTTLTPITTTTTVTPTPTPTGTQTPTTTPISTTTTVIPTPTPTGTQTPTSTPITTTTTVTPTPTPTGTQTPTSTPISTTTTVTPTATPTGTQTPTLTPITTTTTVTSTPTPTGTQTPTPTPITTTTTVTPTPTPTSTQTPTSTPITTTTTVTPTPTPTGTQTPTTTHITTTTTVTPTPTPTGTQAPTPTAITTTTTVTPTPTPTGTQTPTTTPITTTTTVTPTPTPTGTQSPTPTAITTTTTVTPTPTPTGTQTPTTTPITTTTTVTPTPTPTGTQSTTLTPITTTTTVTPIPTPTGTQTPTSTPITTTITVTPTPTPTGTQTPTPTPISTTTTVTPTPTPTGTQTPTTTPITTTTTVTPTPTPTGTQTPTTTPISTTTTVTPTPTPTGTQTPTSTPITTTTTVTPTPTPTGTQTPTPTPITTTTTVTPTPTPTGTQTPTSTPITTTTTVTPTPTPTGTQTPTPTPITTTTTVTPTPTPTGTQTPTSTPITTTTTVTPTPTPTGTQTPTTTPITTTTTVTPTPTPTGTQSTTLTPITTTTTVTPTPTPTGTQTPTSTPITTTTTVTPTPTGTQTPTPTPISTTTTVTPTPTPTGTQTPTMTPITTTTTVTPTPTPTGTQTPTTTPISTTTTVTPTPTPTGTQTPTSTPITTTTTVTPTPTPTGTQTPTTTPITTTTTVTPTPTPTGTQSTTLTPITTTTTVTPTPTPTGTQTPTPTPISTTTTVTPTPTPTGTQTPTTTPITTTTTVTPTPTPTGTQTPTTTPISTTTTVTPTPTPTGTQTPTSTPITTTTTVTPTPTPTGTQTPTTTPITTTTTVTPTPTPTGTQAPTPTAITTTTTVTPTPTPTGTQTPTTTPITTTTMVTPTPTPTGTQTPTSTPITTTTTVTPTPTPTGTQTPTPTPISTTTTVTPTPTPTGTQTPTTTPITTTTTVTPTPTPTGTQTPTTTPISTTTTVTPTPTPTGTQTPTSTPITTTTTVTPTPTPTGTQTPTPTPITTTTTVTPTPTPTGTQTPTSTPITTTTTVTPTPTPTGTQTPTTTPITTTTTVTPTPTPTGTQSTTLTPITTTTTVTPTPTPTGTQTPTSTPITTTTTVTPTPTPTGTQTPTPTPISTTSTVTPTPTPTGTQTPTMTPITTTTTVTPTPTPTGTQTPTSTPITTTTTVTPTPTPTGTQTPTMTPITTTTTVTPTPTPTGTQAPTPTAITTTTTVTPTPTPTGTQTPTTTPITTTTTVTPTPTPTGTQSTTLTPITTTTTVTPTPTPTGTQTPTPTPISTTTTVTPTPTPTGTQTPTMTPITTTTTVTPTPTPTGTQTPTTTPISTTTTVTPTPTPTGTQTPTTTPITTTTTVTPTPTPTGTQTPTTTPISTTTTVTPTPTPTGTQTPTTTPITTTTTVTPTPTPTGTQTPTTTPISTTTTVTPTPTPTGTQTPTSTPITTTTTVTPTPTPTGTQTPTTTPITTTTTVTPTPTPTGTQAPTPTAITTTSTVTPTPTPTGTQTPTTTPITTTTTVTPTPTPTGTQSPTPTAITTTTTVTPTPTPTGTQTPTLTPITTTTTVTPTPTPTGTQTPTPTPISTTTTVTPTPTPTGTQTPTTTPITTTTTVTPTPTPTGTQTPTTVLITTTTTMTPTPTPTSTKSTTVTPITTTTTVTATPTPTGTQTPTMIPISTTTTVTPTPTPTTGSTGPPTHTSTAPIAELTTSNPPPESSTPQTSRSTSSPLTESTTLLSTLPPAIEMTSTAPPSTPTAPTTTSGGHTLSPPPSTTTSPPGTPTRGTTTGSSSAPTPSTVQTTTTSAWTPTPTPLSTPSIIRTTGLRPYPSSVLICCVLNDTYYAPGEEVYNGTYGDTCYFVNCSLSCTLEFYNWSCPSTPSPTPTPSKSTPTPSKPSSTPSKPTPGTKPPECPDFDPPRQENETWWLCDCFMATCKYNNTVEIVKVECEPPPMPTCSNGLQPVRVEDPDGCCWHWECDCYCTGWGDPHYVTFDGLYYSYQGNCTYVLVEEISPSVDNFGVYIDNYHCDPNDKVSCPRTLIVRHETQEVLIKTVHMMPMQVQVQVNRQAVALPYKKYGLEVYQSGINYVVDIPELGVLVSYNGLSFSVRLPYHRFGNNTKGQCGTCTNTTSDDCILPSGEIVSNCEAAADQWLVNDPSKPHCPHSSSTTKRPAVTVPGGGKTTPHKDCTPSPLCQLIKDSLFAQCHALVPPQHYYDACVFDSCFMPGSSLECASLQAYAALCAQQNICLDWRNHTHGACLVECPSHREYQACGPAEEPTCKSSSSQQNNTVLVEGCFCPEGTMNYAPGFDVCVKTCGCVGPDNVPREFGEHFEFDCKNCVCLEGGSGIICQPKRCSQKPVTHCVEDGTYLATEVNPADTCCNITVCKCNTSLCKEKPSVCPLGFEVKSKMVPGRCCPFYWCESKGVCVHGNAEYQPGSPVYSSKCQDCVCTDKVDNNTLLNVIACTHVPCNTSCSPGFELMEAPGECCKKCEQTHCIIKRPDNQHVILKPGDFKSDPKNNCTFFSCVKIHNQLISSVSNITCPNFDASICIPGSITFMPNGCCKTCTPRNETRVPCSTVPVTTEVSYAGCTKTVLMNHCSGSCGTFVMYSAKAQALDHSCSCCKEEKTSQREVVLSCPNGGSLTHTYTHIESCQCQDTVCGLPTGTSRRARRSPRHLGSG.

The first 20 residues, 1-20, serve as a signal peptide directing secretion; the sequence is MGLPLARLAAVCLALSLAGG. S21 is subject to Phosphoserine. H34 is a binding site for Cu(2+). A VWFD 1 domain is found at 35 to 207; it reads NVCSTWGNFH…KINQPDVVCE (173 aa). 29 cysteine pairs are disulfide-bonded: C37-C169, C59-C206, C67-C166, C218-C255, C225-C250, C237-C275, C257-C263, C265-C291, C295-C329, C308-C321, C312-C351, C331-C345, C353-C375, C370-C387, C373-C382, C391-C528, C413-C563, C435-C443, C574-C619, C588-C614, C601-C639, C621-C627, C629-C654, C661-C698, C674-C688, C678-C718, C700-C712, C720-C742, and C740-C749. D49 lines the Ca(2+) pocket. Cu(+) contacts are provided by M146 and M154. Residue E156 coordinates Cu(2+). N163 is a glycosylation site (N-linked (GlcNAc...) asparagine). The Ca(2+) site is built by D171, N173, L175, and E180. H277 provides a ligand contact to Cu(2+). The TIL domain occupies 295–351; sequence CPGNLVYLESGSPCMDTCSHLEVSSLCEEHRMDGCFCPEGTVYDDIGDSGCVPVSQC. H324 lines the Cu(2+) pocket. M326 lines the Cu(+) pocket. In terms of domain architecture, VWFD 2 spans 389 to 564; that stretch reads GTCALEGGSH…NTWKAQSSCH (176 aa). Residue D403 participates in Ca(2+) binding. N-linked (GlcNAc...) asparagine glycosylation occurs at N423. N530, N532, L534, D537, and D538 together coordinate Ca(2+). N670 is a glycosylation site (N-linked (GlcNAc...) asparagine). N770 carries an N-linked (GlcNAc...) asparagine glycan. 21 disulfide bridges follow: C784/C820, C802/C814, C822/C844, C839/C856, C842/C851, C860/C992, C882/C1027, C891/C989, C909/C916, C1037/C1080, C1051/C1075, C1062/C1102, C1082/C1090, C1092/C1117, C1108/C1137, C1121/C1163, C1145/C1187, C1167/C1181, C1189/C1213, C1208/C1238, and C1211/C1221. Residues 858–1028 enclose the VWFD 3 domain; that stretch reads GTCSIYGSGH…NSWKEAPTCP (171 aa). Residue D872 coordinates Ca(2+). N894 carries an N-linked (GlcNAc...) asparagine glycan. Ca(2+)-binding residues include N994, D996, R998, N1001, and D1002. Residues N1139 and N1154 are each glycosylated (N-linked (GlcNAc...) asparagine). N-linked (GlcNAc...) asparagine glycosylation is found at N1215, N1230, and N1246. T1266, T1267, T1269, T1270, T1272, T1275, T1276, T1281, T1282, and T1287 each carry an O-linked (GalNAc) threonine glycan. 2 O-linked (GalNAc) serine glycosylation sites follow: S1291 and S1292. O-linked (GalNAc) threonine glycosylation is present at T1293. An O-linked (GalNAc) serine glycan is attached at S1296. T1297 carries O-linked (GalNAc) threonine glycosylation. Residues N1310, D1312, H1313, S1316, D1319, G1321, D1322, E1324, D1381, and Y1382 each coordinate Ca(2+). Pro residues-rich tracts occupy residues 1399–1411, 1419–1510, 1520–1549, 1559–1628, and 1638–1679; these read PSPP…PPPT, TTTP…PITP, and TTTP…PPTT. The interval 1399 to 1773 is disordered; the sequence is PSPPTTTPSP…SITPPTFSPF (375 aa). Repeat copies occupy residues 1401 to 1416, 1417 to 1432, 1433 to 1448, 1449 to 1464, 1465 to 1471, and 1472 to 1478. The segment at 1401–1747 is approximate repeats; sequence PPTTTPSPPP…SPPTTTMTTL (347 aa). The stretch at 1479 to 1494 is one 7A repeat; the sequence is PPTTTPSPPTTTTTTP. A 7B repeat occupies 1495-1517; that stretch reads PPTTTPSPPTTTPITPPASTTTL. The stretch at 1518 to 1533 is one 8A repeat; it reads PPTTTPSPPTTTTTTP. The 8B repeat unit spans residues 1534–1556; sequence PPTTTPSPPTTTPITPPTSTTTL. Residues 1557 to 1572 form a 9A repeat; the sequence is PPTTTPSPPPTTTTTP. A 9B repeat occupies 1573–1596; it reads PPTTTPSPPTTTTPSPPTITTTTP. The stretch at 1597 to 1612 is one 10A repeat; it reads PPTTTPSPPTTTTTTP. One copy of the 10B repeat lies at 1613–1635; the sequence is PPTTTPSPPTTTPITPPTSTTTL. The stretch at 1636 to 1651 is one 11A repeat; that stretch reads PPTTTPSPPPTTTTTP. The 11B repeat unit spans residues 1652–1675; that stretch reads PPTTTPSPPTTTTPSPPITTTTTP. A run of 5 repeats spans residues 1676-1683, 1684-1699, 1700-1715, 1716-1731, and 1732-1747. 2 stretches are compositionally biased toward low complexity: residues 1680–1720 and 1741–1759; these read TPSS…STTT and TTTM…LTTT. Positions 1760–1770 are enriched in pro residues; sequence PLPPSITPPTF. N1787 and N1820 each carry an N-linked (GlcNAc...) asparagine glycan. 4 stretches are compositionally biased toward low complexity: residues 1885 to 2158, 2165 to 4238, 4269 to 4315, and 4329 to 4430; these read MTTT…TMVT, GTQT…QTPT, TTVT…STAP, and STPQ…PSII. Disordered stretches follow at residues 1885–4238 and 4269–4430; these read MTTT…QTPT and TTVT…PSII. 4 N-linked (GlcNAc...) asparagine glycosylation sites follow: N4449, N4461, N4472, and N4483. Residues 4492–4524 form a disordered region; the sequence is PTPTPSKSTPTPSKPSSTPSKPTPGTKPPECPD. Positions 4496–4511 are enriched in low complexity; it reads PSKSTPTPSKPSSTPS. The span at 4512-4522 shows a compositional bias: pro residues; the sequence is KPTPGTKPPEC. N-linked (GlcNAc...) asparagine glycosylation is found at N4532, N4548, and N4612. A VWFD 4 domain is found at 4589-4772; the sequence is CYCTGWGDPH…VNDPSKPHCP (184 aa). 3 cysteine pairs are disulfide-bonded: C4591-C4732, C4613-C4771, and C4637-C4645. N-linked (GlcNAc...) asparagine glycans are attached at residues N4726 and N4737. The segment at 4770–4795 is disordered; the sequence is HCPHSSSTTKRPAVTVPGGGKTTPHK. 9 N-linked (GlcNAc...) asparagine glycosylation sites follow: N4862, N4897, N4991, N4998, N5065, N5080, N5129, N5148, and N5179. In terms of domain architecture, VWFC 1 spans 4927–4996; it reads CVGPDNVPRE…DTCCNITVCK (70 aa). The 68-residue stretch at 5034 to 5101 folds into the VWFC 2 domain; that stretch reads GVCVHGNAEY…APGECCKKCE (68 aa). 4 cysteine pairs are disulfide-bonded: C5185/C5232, C5199/C5246, C5208/C5262, and C5212/C5264. Residues 5185-5270 enclose the CTCK domain; sequence CSTVPVTTEV…SCQCQDTVCG (86 aa).

In terms of assembly, homomultimer; disulfide-linked. The N- and C-terminus mediate their assembly into higher order structures to form filaments. The CTCK domains of two polypeptides associate in the endoplasmic reticulum to generate intermolecularly disulfide-bonded dimers. These dimers progress to the Golgi apparatus, which is a more acidic environment than the endoplasmic reticulum. Under acidic conditions, the N-termini form non-covalent intermolecular interactions that juxtapose assemblies of the third VWD domain (VWD3) from different CTCK-linked dimers. The VWD3 assemblies then become disulfide bonded to one another to produce long, disulfide-linked polymers that remain highly compact until secretion. Interacts with FCGBP. Interacts with AGR2; disulfide-linked. (Microbial infection) Interacts in vitro with L.monocytogenes internalin proteins InlB, InlC and InlJ; for InlC binding is slightly better at pH 5.5, (the pH of the intestine) than at pH 7.4. In terms of processing, O-glycosylated. O-glycosylation is required for mucin assembly. Goblet cells synthesize two forms of mucin that differ in branched chain O-glycosylation and the site of production in the colon. Post-translationally, may undergo proteolytic cleavage in the outer mucus layer of the colon, contributing to the expanded volume and loose nature of this layer which allows for bacterial colonization in contrast to the inner mucus layer which is dense and devoid of bacteria. At low pH of 6 and under, undergoes autocatalytic cleavage in vitro in the N-terminal region of the fourth VWD domain. It is likely that this also occurs in vivo and is triggered by the low pH of the late secretory pathway. As to expression, colon, small intestine, colonic tumors, bronchus, cervix and gall bladder.

The protein resides in the secreted. In terms of biological role, coats the epithelia of the intestines and other mucus membrane-containing organs to provide a protective, lubricating barrier against particles and infectious agents at mucosal surfaces. Major constituent of the colon mucus, which is mainly formed by large polymeric networks of MUC2 secreted by goblet cells that cover the exposed surfaces of intestine. MUC2 networks form hydrogels that guard the underlying epithelium from pathogens and other hazardous matter entering from the outside world, while permitting nutrient absorption and gas exchange. Acts as a divalent copper chaperone that protects intestinal cells from copper toxicity and facilitates nutritional copper unptake into cells. Binds both Cu(2+) and its reduced form, Cu(1+), at two juxtaposed binding sites: Cu(2+), once reduced to Cu(1+) by vitamin C (ascorbate) or other dietary antioxidants, transits to the other binding site. MUC2-bound Cu(1+) is protected from oxidation in aerobic environments, and can be released for nutritional delivery to cells. Mucin gels store antimicrobial molecules that participate in innate immunity. Mucin glycoproteins also house and feed the microbiome, lubricate tissue surfaces, and may facilitate the removal of contaminants and waste products from the body. Goblet cells synthesize two forms of MUC2 mucin that differ in branched chain O-glycosylation and the site of production in the colon: a (1) 'thick' mucus that wraps the microbiota to form fecal pellets is produced in the proximal, ascending colon. 'Thick' mucus transits along the descending colon and is lubricated by a (2) 'thin' MUC2 mucus produced in the distal colon which adheres to the 'thick' mucus. The protein is Mucin-2 of Homo sapiens (Human).